Reading from the N-terminus, the 618-residue chain is Dihydroxy-acid dehydratase 1 (618 aa).

D81 contributes to the Mg(2+) binding site. Position 122 (C122) interacts with [2Fe-2S] cluster. Positions 123 and 124 each coordinate Mg(2+). At K124 the chain carries N6-carboxylysine. C195 is a binding site for [2Fe-2S] cluster. E491 lines the Mg(2+) pocket. The active-site Proton acceptor is S517.

This sequence belongs to the IlvD/Edd family. In terms of assembly, homodimer. [2Fe-2S] cluster is required as a cofactor. The cofactor is Mg(2+).

The catalysed reaction is (2R)-2,3-dihydroxy-3-methylbutanoate = 3-methyl-2-oxobutanoate + H2O. It catalyses the reaction (2R,3R)-2,3-dihydroxy-3-methylpentanoate = (S)-3-methyl-2-oxopentanoate + H2O. The protein operates within amino-acid biosynthesis; L-isoleucine biosynthesis; L-isoleucine from 2-oxobutanoate: step 3/4. It participates in amino-acid biosynthesis; L-valine biosynthesis; L-valine from pyruvate: step 3/4. Its function is as follows. Functions in the biosynthesis of branched-chain amino acids. Catalyzes the dehydration of (2R,3R)-2,3-dihydroxy-3-methylpentanoate (2,3-dihydroxy-3-methylvalerate) into 2-oxo-3-methylpentanoate (2-oxo-3-methylvalerate) and of (2R)-2,3-dihydroxy-3-methylbutanoate (2,3-dihydroxyisovalerate) into 2-oxo-3-methylbutanoate (2-oxoisovalerate), the penultimate precursor to L-isoleucine and L-valine, respectively. This Pseudoalteromonas translucida (strain TAC 125) protein is Dihydroxy-acid dehydratase 1.